The following is a 352-amino-acid chain: MSKFWNERVKKLEPYVPGEQPKDQKYIKLNTNENPYPPSPMVIEAIKKEADYKLKLYPDPNCDSLKRTIAEYYGISDKEVFVGNGSDEVLAFSFMTFFSPRKTVFFADITYSFYKVYANLLNLNCELIPLKEDFSLDLDNFCRCNGGVIIPNPNAPTAKYIGLSDIKKILDWNKDSVVIIDEAYIDFGGESAVKFIKDYKNLLIVQTLSKSRSLAGLRIGFAMGSPELIEGLSRVKNSINSYTLDRLAIVGAEAAFKDKEYFEDARRKIIATRERVSTELKQIGFKVIESKANFIFISHTTISAESIFNELRKRGILVRYFKTARIDNFLRVSIGTDKEMSEFMDKIKECIA.

An N6-(pyridoxal phosphate)lysine modification is found at K210.

It belongs to the class-II pyridoxal-phosphate-dependent aminotransferase family. Histidinol-phosphate aminotransferase subfamily. In terms of assembly, homodimer. Pyridoxal 5'-phosphate serves as cofactor.

The enzyme catalyses L-histidinol phosphate + 2-oxoglutarate = 3-(imidazol-4-yl)-2-oxopropyl phosphate + L-glutamate. It participates in amino-acid biosynthesis; L-histidine biosynthesis; L-histidine from 5-phospho-alpha-D-ribose 1-diphosphate: step 7/9. This Clostridium acetobutylicum (strain ATCC 824 / DSM 792 / JCM 1419 / IAM 19013 / LMG 5710 / NBRC 13948 / NRRL B-527 / VKM B-1787 / 2291 / W) protein is Histidinol-phosphate aminotransferase.